The primary structure comprises 270 residues: MVLLKEYRVILPVSVEEYQVGQLYSVAEASKNETGGGEGVEVLVNEPYEKDGEKGQYTHKIYHLQSKVPTFVRMLAPEGALNIHEKAWNAYPYCRTVITNEYMKEDFLIKIETWHKPDLGTLENVHKLEPEAWKHVEVIYIDIADRSQVLSKDYKAEEDPAKYKSIKTGRGPLGPNWKQELVNQKDCPYMCAYKLVTVKFKWWGLQNKVENFIHKQERRLFTNFHRQLFCWLDKWVDLTMDDIRRMEDETKRQLDEMRQKDPVKGMTADD.

Residues Thr-58, Lys-60, Glu-85, Asn-89, Thr-96, and Lys-194 each contribute to the a 1,2-diacyl-sn-glycero-3-phospho-(1D-myo-inositol) site. Position 215 is an N6-acetyllysine (Lys-215).

Belongs to the PtdIns transfer protein family. PI transfer class I subfamily. Phosphorylated by PKC in a calcium and phosphatidylserine-dependent manner.

The protein localises to the cytoplasm. It localises to the nucleus. It carries out the reaction a 1,2-diacyl-sn-glycero-3-phosphocholine(in) = a 1,2-diacyl-sn-glycero-3-phosphocholine(out). The enzyme catalyses a 1,2-diacyl-sn-glycero-3-phospho-(1D-myo-inositol)(in) = a 1,2-diacyl-sn-glycero-3-phospho-(1D-myo-inositol)(out). Catalyzes the transfer of phosphatidylinositol (PI) and phosphatidylcholine (PC) between membranes. Shows a preference for PI and PC containing shorter saturated or monosaturated acyl chains at the sn-1 and sn-2 positions. Preference order for PC is C16:1 &gt; C16:0 &gt; C18:1 &gt; C18:0 &gt; C20:4 and for PI is C16:1 &gt; C16:0 &gt; C18:1 &gt; C18:0 &gt; C20:4 &gt; C20:3. This Bos taurus (Bovine) protein is Phosphatidylinositol transfer protein alpha isoform (PITPNA).